The sequence spans 504 residues: Anthocyanidin 3-O-glucoside 5-O-glucosyltransferase (504 aa).

Catalysis depends on His-23, which acts as the Proton acceptor. His-23 lines the an anthocyanidin pocket. The interval 107-126 (TKKGQGQGQGQGQGQGQGQG) is disordered. Positions 111–125 (QGQGQGQGQGQGQGQ) are enriched in gly residues. Positions 157, 377, 392, 395, 396, 397, 400, 416, and 417 each coordinate UDP-alpha-D-glucose.

The protein belongs to the UDP-glycosyltransferase family. Predominantly expressed in petals and weakly in filaments. Not expressed in leaves, stems and other floral organs.

It carries out the reaction an anthocyanidin 3-O-beta-D-glucoside + UDP-alpha-D-glucose = an anthocyanidin 3,5-di-O-beta-D-glucoside + UDP + 2 H(+). It functions in the pathway pigment biosynthesis; anthocyanin biosynthesis. Its function is as follows. Catalyzes the glucosylation at the O-5 position of anthocyanidin 3-glucosides to form anthocyanidin 3,5-di-O-glucosides using UDP-glucose as sugar donor. Anthocyanidin 3,5-di-O-glucosides are molecules that are responsible for pigmentation. Involved in biosynsthesis of accumulate gentiodelphin, a unique polyacylated delphinidin-type anthocyanin, in the petals. Also acts on anthocyanidin 3-O-(6-O-malonylglucoside). Much less active with hydroxycinnamoylglucose derivatives. No activity in the absence of the 3-O-glucoside group. This Gentiana triflora (Clustered gentian) protein is Anthocyanidin 3-O-glucoside 5-O-glucosyltransferase (5GT7).